Consider the following 511-residue polypeptide: Histidine ammonia-lyase (511 aa).

A cross-link (5-imidazolinone (Ala-Gly)) is located at residues 144-146; it reads ASG. A 2,3-didehydroalanine (Ser) modification is found at serine 145.

The protein belongs to the PAL/histidase family. In terms of processing, contains an active site 4-methylidene-imidazol-5-one (MIO), which is formed autocatalytically by cyclization and dehydration of residues Ala-Ser-Gly.

It localises to the cytoplasm. The catalysed reaction is L-histidine = trans-urocanate + NH4(+). Its pathway is amino-acid degradation; L-histidine degradation into L-glutamate; N-formimidoyl-L-glutamate from L-histidine: step 1/3. This chain is Histidine ammonia-lyase, found in Halalkalibacterium halodurans (strain ATCC BAA-125 / DSM 18197 / FERM 7344 / JCM 9153 / C-125) (Bacillus halodurans).